The sequence spans 3418 residues: Breast cancer type 2 susceptibility protein (3418 aa).

The interaction with PALB2 stretch occupies residues 1–40; that stretch reads MPIGSKERPTFFEIFKTRCNKADLGPISLNWFEELSSEAP. The tract at residues 37 to 68 is disordered; sequence SEAPPYNSEPAEESEHKNNNYEPNLFKTPQRK. Residue Ser-70 is modified to Phosphoserine. The disordered stretch occupies residues 358 to 381; the sequence is VEPNDTDPLDSNVANQKPFESGSD. Residues Ser-445, Ser-492, and Ser-755 each carry the phosphoserine modification. The tract at residues 639–1000 is interaction with NPM1; the sequence is LHSSVKRSCS…NKWAGLLGPI (362 aa). BRCA2 repeat units follow at residues 1002–1036, 1212–1246, 1421–1455, 1517–1551, 1664–1698, and 1837–1871; these read NHSFGGSFRTASNKEIKLSEHNIKKSKMFFKDIEE, NEVGFRGFYSAHGTKLNVSTEALQKAVKLFSDIEN, FETSDTFFQTASGKNISVAKESFNKIVNFFDQKPE, KEPTLLGFHTASGKKVKIAKESLDKVKNLFDEKEQ, IENSALAFYTSCSRKTSVSQTSLLEAKKWLREGIF, and FEVGPPAFRIASGKIVCVSHETIKKVKDIFTDSFS. Positions 1003-2082 are interaction with RAD51; sequence HSFGGSFRTA…LHKVKGVLEE (1080 aa). The interval 1338–1781 is interaction with POLH; the sequence is GSDSSKNDTV…IEPVLKNVED (444 aa). Residues 1410 to 1595 are required for stimulation of POLH DNA polymerization activity; that stretch reads TATKTEQNIK…TAAPKCKEMQ (186 aa). Position 1970 is a phosphoserine (Ser-1970). One copy of the BRCA2 7 repeat lies at 1971–2005; it reads SANTCGIFSTASGKSVQVSDASLQNARQVFSEIED. A Phosphothreonine modification is found at Thr-2035. A BRCA2 8 repeat occupies 2051-2085; the sequence is NSSAFSGFSTASGKQVSILESSLHKVKGVLEEFDL. Ser-2095 carries the post-translational modification Phosphoserine. An interaction with HSF2BP region spans residues 2270 to 2337; sequence GKRRGEPLIL…EPITCVPFRT (68 aa). The tract at residues 2350–2545 is interaction with FANCD2; the sequence is TAPGQEFLSK…SHKQLYTYGV (196 aa). The segment at 2430-2450 is disordered; that stretch reads ENRQKQNIDGHGSDDSKNKIN. An interaction with SEM1 region spans residues 2481-2832; that stretch reads ITSLQNARDI…QRAYPIQWME (352 aa). The Nuclear export signal; masked by interaction with SEM1 signature appears at 2682-2698; the sequence is AAKTLVLCVSDIISLSA. Ser-3291 carries the phosphoserine; by CDK1 and CDK2 modification. Position 3319 is a phosphoserine (Ser-3319). Residue Thr-3387 is modified to Phosphothreonine; by CHEK1 and CHEK2. Residues 3393 to 3418 form a disordered region; the sequence is EQESSQASTEECEKNKQDTITTKKYI.

As to quaternary structure, monomer and dimer. Interacts with RAD51; regulates RAD51 recruitment and function at sites of DNA repair. Interacts with WDR16, USP11, DMC1, ROCK2 and NPM1. Interacts with SEM1; the interaction masks a nuclear export signal in BRCA2. Interacts with both nonubiquitinated and monoubiquitinated FANCD2; this complex also includes XRCC3 and phosphorylated FANCG. Part of a BRCA complex containing BRCA1, BRCA2 and PALB2. Component of the homologous recombination repair (HR) complex composed of ERCC5/XPG, BRCA2, PALB2, DSS1 and RAD51. Within the complex, interacts with ERCC5/XPG and PALB2. Interacts directly with PALB2 which may serve as a scaffold for a HR complex containing PALB2, BRCA2, RAD51C, RAD51 and XRCC3. Interacts with BRCA1 only in the presence of PALB2 which serves as the bridging protein. Interacts with POLH; the interaction is direct. Interacts with the TREX-2 complex subunits PCID2 and SEM1. Interacts with HSF2BP and BRME1; the interaction with HSF2BP is direct and allows the formation of a ternary complex. The complex BRME1:HSF2BP:BRCA2 interacts with SPATA22, MEIOB and RAD51. Phosphorylated by ATM upon irradiation-induced DNA damage. Phosphorylation by CHEK1 and CHEK2 regulates interaction with RAD51. Phosphorylation at Ser-3291 by CDK1 and CDK2 is low in S phase when recombination is active, but increases as cells progress towards mitosis; this phosphorylation prevents homologous recombination-dependent repair during S phase and G2 by inhibiting RAD51 binding. In terms of processing, ubiquitinated in the absence of DNA damage; this does not lead to proteasomal degradation. In contrast, ubiquitination in response to DNA damage leads to proteasomal degradation. Highest levels of expression in breast and thymus, with slightly lower levels in lung, ovary and spleen.

It is found in the nucleus. Its subcellular location is the cytoplasm. The protein resides in the cytoskeleton. The protein localises to the microtubule organizing center. It localises to the centrosome. Its function is as follows. Involved in double-strand break repair and/or homologous recombination. Binds RAD51 and potentiates recombinational DNA repair by promoting assembly of RAD51 onto single-stranded DNA (ssDNA). Acts by targeting RAD51 to ssDNA over double-stranded DNA, enabling RAD51 to displace replication protein-A (RPA) from ssDNA and stabilizing RAD51-ssDNA filaments by blocking ATP hydrolysis. Part of a PALB2-scaffolded HR complex containing RAD51C and which is thought to play a role in DNA repair by HR. May participate in S phase checkpoint activation. Binds selectively to ssDNA, and to ssDNA in tailed duplexes and replication fork structures. May play a role in the extension step after strand invasion at replication-dependent DNA double-strand breaks; together with PALB2 is involved in both POLH localization at collapsed replication forks and DNA polymerization activity. In concert with NPM1, regulates centrosome duplication. Interacts with the TREX-2 complex (transcription and export complex 2) subunits PCID2 and SEM1, and is required to prevent R-loop-associated DNA damage and thus transcription-associated genomic instability. Silencing of BRCA2 promotes R-loop accumulation at actively transcribed genes in replicating and non-replicating cells, suggesting that BRCA2 mediates the control of R-loop associated genomic instability, independently of its known role in homologous recombination. This Homo sapiens (Human) protein is Breast cancer type 2 susceptibility protein.